Consider the following 377-residue polypeptide: MHCVQYQAGRCHSCQWLSIPYSRQLEDKQRHLSALLSGHSVAQWLSAQPSAELAMRNKAKMVVSGSVERPLLGMLQRDGSGVDLCDCPLYPDSFAVVFAALKSFIPRAGLTPYSVARRRGELKYLLLTESRLNGEMMLRFVLRSETKLAQLRQALPWLQAQLPQLAVISVNIQPVHMAILEGEREIFLTSQQVLSESFNGVPLYIRPQSFFQTNPAVAQALYAQARDWVQALGVTEMWDLFCGVGGFGLHCATPEMTLTGIEISAGAIACARRSAAQLGLTKVSFAALDSGAFADAHSAVPQLVLVNPPRRGIGAALCDYMNRMAPPYILYSSCNAQSMVQDIERLADYRIEKVRLFDMFPHTAHYEVLTLLVRASA.

[4Fe-4S] cluster-binding residues include cysteine 3, cysteine 11, cysteine 14, and cysteine 87. Positions 212, 241, 262, and 307 each coordinate S-adenosyl-L-methionine. The active-site Nucleophile is cysteine 334.

This sequence belongs to the class I-like SAM-binding methyltransferase superfamily. RNA M5U methyltransferase family. RlmC subfamily.

The enzyme catalyses uridine(747) in 23S rRNA + S-adenosyl-L-methionine = 5-methyluridine(747) in 23S rRNA + S-adenosyl-L-homocysteine + H(+). Functionally, catalyzes the formation of 5-methyl-uridine at position 747 (m5U747) in 23S rRNA. In Edwardsiella ictaluri (strain 93-146), this protein is 23S rRNA (uracil(747)-C(5))-methyltransferase RlmC.